A 273-amino-acid polypeptide reads, in one-letter code: 4-hydroxy-tetrahydrodipicolinate reductase (273 aa).

NAD(+) is bound by residues 12–17 and glutamate 38; that span reads GAGGRM. An NADP(+)-binding site is contributed by arginine 39. Residues 102–104 and 126–129 each bind NAD(+); these read GTT and AANF. Residue histidine 159 is the Proton donor/acceptor of the active site. Histidine 160 lines the (S)-2,3,4,5-tetrahydrodipicolinate pocket. The active-site Proton donor is lysine 163. 169–170 contacts (S)-2,3,4,5-tetrahydrodipicolinate; that stretch reads GT.

This sequence belongs to the DapB family. As to quaternary structure, homotetramer.

It localises to the cytoplasm. It catalyses the reaction (S)-2,3,4,5-tetrahydrodipicolinate + NAD(+) + H2O = (2S,4S)-4-hydroxy-2,3,4,5-tetrahydrodipicolinate + NADH + H(+). The catalysed reaction is (S)-2,3,4,5-tetrahydrodipicolinate + NADP(+) + H2O = (2S,4S)-4-hydroxy-2,3,4,5-tetrahydrodipicolinate + NADPH + H(+). Its pathway is amino-acid biosynthesis; L-lysine biosynthesis via DAP pathway; (S)-tetrahydrodipicolinate from L-aspartate: step 4/4. Its function is as follows. Catalyzes the conversion of 4-hydroxy-tetrahydrodipicolinate (HTPA) to tetrahydrodipicolinate. This chain is 4-hydroxy-tetrahydrodipicolinate reductase, found in Salmonella arizonae (strain ATCC BAA-731 / CDC346-86 / RSK2980).